The sequence spans 606 residues: MCGISACLNHTNNSAMTSVVNALTKLQNRGYDSAGICTTSNGKFNFVKSVSDDTNNAIHYIKNNPLANHHCSIAIGHTRWATHGEKTIENAHPHFDASGRFSLIHNGIIENYDQIKSMLVESQNYQFYGQTDTEVAVAYLSYLLSENKTWFDFNESLKGSWAIIALDKFNPEKLYFMRNGSPLIIGFNETNTKAMIVSELSGFDSDISQYCIVGDNDYGYITNNNDKYIIKSQQHYQMISMGKIVMDLTPSPYKHWTQREIYDQPNAIHSLITERIVDSQLFFPEFNTINFTLVEHIVLLGCGTSYHAAQIGRRYIREFRPNITVDVIDGADFEETDIPKSRNTLLILLSQSGETKDLYRALVIGKQHSLKTIGIINVENSLIAREVDTVLYLRAGRENAVASTKSFTNQVLMLFMLALKINLSLDNSQLDYYTMSLNNFPIEFKKIIDQSVNEIPKLLEFFDNQTSCFILGKFGLEWIAKEGSLKIKEISYVHSEGYSSAALKHGPFALLHQNIPVVLLANDDSYFSKIENANSEIRSRKAKVIFITNKLIDNHCTDYLIHINTKSPLFHLLCIVPLQLLAYHLALSKGINPDYPRNLAKVVTVE.

The For GATase activity role is filled by C2. In terms of domain architecture, Glutamine amidotransferase type-2 spans 2-224 (CGISACLNHT…DNDYGYITNN (223 aa)). SIS domains are found at residues 282 to 427 (FFPE…SLDN) and 458 to 596 (LLEF…PDYP).

It carries out the reaction D-fructose 6-phosphate + L-glutamine = D-glucosamine 6-phosphate + L-glutamate. Its pathway is nucleotide-sugar biosynthesis; UDP-N-acetyl-alpha-D-glucosamine biosynthesis; alpha-D-glucosamine 6-phosphate from D-fructose 6-phosphate: step 1/1. Controls the flux of glucose into the hexosamine pathway. Most likely involved in regulating the availability of precursors for glycosylation of proteins (Potential). The protein is Probable glutamine--fructose-6-phosphate aminotransferase [isomerizing] of Acanthamoeba polyphaga (Amoeba).